The primary structure comprises 456 residues: Phosphomethylpyrimidine synthase (456 aa).

Residues Asn80, Met109, Tyr139, His175, 195-197 (SRG), 236-239 (DSLR), and Glu275 contribute to the substrate site. His279 contacts Zn(2+). Substrate is bound at residue Tyr302. His343 contributes to the Zn(2+) binding site. 3 residues coordinate [4Fe-4S] cluster: Cys423, Cys426, and Cys431.

The protein belongs to the ThiC family. The cofactor is [4Fe-4S] cluster.

The enzyme catalyses 5-amino-1-(5-phospho-beta-D-ribosyl)imidazole + S-adenosyl-L-methionine = 4-amino-2-methyl-5-(phosphooxymethyl)pyrimidine + CO + 5'-deoxyadenosine + formate + L-methionine + 3 H(+). It participates in cofactor biosynthesis; thiamine diphosphate biosynthesis. Catalyzes the synthesis of the hydroxymethylpyrimidine phosphate (HMP-P) moiety of thiamine from aminoimidazole ribotide (AIR) in a radical S-adenosyl-L-methionine (SAM)-dependent reaction. This chain is Phosphomethylpyrimidine synthase, found in Prochlorococcus marinus (strain MIT 9312).